Here is a 330-residue protein sequence, read N- to C-terminus: Ketol-acid reductoisomerase (NADP(+)) (330 aa).

Residues 1–181 (MNVYYEKDAD…GGTKAGVIET (181 aa)) form the KARI N-terminal Rossmann domain. Residues 24–27 (YGSQ), Arg47, Ser50, Ser52, and 82–85 (DQNQ) contribute to the NADP(+) site. Residue His107 is part of the active site. Gly133 is a binding site for NADP(+). Residues 182 to 327 (NFKNETETDL…AKLRNMMSWL (146 aa)) form the KARI C-terminal knotted domain. Positions 190, 194, 226, and 230 each coordinate Mg(2+). Ser251 contacts substrate.

Belongs to the ketol-acid reductoisomerase family. Requires Mg(2+) as cofactor.

It catalyses the reaction (2R)-2,3-dihydroxy-3-methylbutanoate + NADP(+) = (2S)-2-acetolactate + NADPH + H(+). The catalysed reaction is (2R,3R)-2,3-dihydroxy-3-methylpentanoate + NADP(+) = (S)-2-ethyl-2-hydroxy-3-oxobutanoate + NADPH + H(+). It functions in the pathway amino-acid biosynthesis; L-isoleucine biosynthesis; L-isoleucine from 2-oxobutanoate: step 2/4. The protein operates within amino-acid biosynthesis; L-valine biosynthesis; L-valine from pyruvate: step 2/4. Functionally, involved in the biosynthesis of branched-chain amino acids (BCAA). Catalyzes an alkyl-migration followed by a ketol-acid reduction of (S)-2-acetolactate (S2AL) to yield (R)-2,3-dihydroxy-isovalerate. In the isomerase reaction, S2AL is rearranged via a Mg-dependent methyl migration to produce 3-hydroxy-3-methyl-2-ketobutyrate (HMKB). In the reductase reaction, this 2-ketoacid undergoes a metal-dependent reduction by NADPH to yield (R)-2,3-dihydroxy-isovalerate. The protein is Ketol-acid reductoisomerase (NADP(+)) of Chlorobium chlorochromatii (strain CaD3).